Reading from the N-terminus, the 177-residue chain is Secretion monitor (177 aa).

Residues 1 to 37 form the signal peptide; sequence MIGILNRWRQFGRRYFWPHLLLGMVAASLGVPSNLSG.

It belongs to the SecM family.

It is found in the cytoplasm. The protein resides in the cytosol. The protein localises to the periplasm. In terms of biological role, regulates secA expression by translational coupling of the secM secA operon. Translational pausing at a specific Pro residue 5 residues before the end of the protein may allow disruption of a mRNA repressor helix that normally suppresses secA translation initiation. The protein is Secretion monitor of Yersinia pseudotuberculosis serotype O:1b (strain IP 31758).